The primary structure comprises 510 residues: NAD(P)H-quinone oxidoreductase subunit 2, chloroplastic (510 aa).

Transmembrane regions (helical) follow at residues 24–44, 59–79, 99–119, 124–144, 149–169, 183–203, 229–249, 295–315, 323–343, 354–374, 395–415, and 418–438; these read LLLFHGSFIFPECILIFGLIL, WFYFISSTSLVISITALLFRW, IFQFLILLCSTLCIPLSVEYI, MAITEFLLFVLTATLGGMFLC, LITIFVAPECFSLCSYLLSGY, YLLMGGASSSILVHGFSWLYG, ISIALIFITVGIGFKLSPAPF, WHLLLEILAILSMILGNLIAI, MLAYSSIGQIGYVIIGIIVGD, YMLFYISMNLGTFACIVLFGL, ALSSALCLLSLGGLPPLAGFF, and LYLFWCGWQAGLYFLVSIGLL.

It belongs to the complex I subunit 2 family. NDH is composed of at least 16 different subunits, 5 of which are encoded in the nucleus.

The protein localises to the plastid. The protein resides in the chloroplast thylakoid membrane. It catalyses the reaction a plastoquinone + NADH + (n+1) H(+)(in) = a plastoquinol + NAD(+) + n H(+)(out). It carries out the reaction a plastoquinone + NADPH + (n+1) H(+)(in) = a plastoquinol + NADP(+) + n H(+)(out). NDH shuttles electrons from NAD(P)H:plastoquinone, via FMN and iron-sulfur (Fe-S) centers, to quinones in the photosynthetic chain and possibly in a chloroplast respiratory chain. The immediate electron acceptor for the enzyme in this species is believed to be plastoquinone. Couples the redox reaction to proton translocation, and thus conserves the redox energy in a proton gradient. This is NAD(P)H-quinone oxidoreductase subunit 2, chloroplastic from Ananas comosus (Pineapple).